We begin with the raw amino-acid sequence, 333 residues long: Phosphate acyltransferase (333 aa).

It belongs to the PlsX family. Homodimer. Probably interacts with PlsY.

Its subcellular location is the cytoplasm. It carries out the reaction a fatty acyl-[ACP] + phosphate = an acyl phosphate + holo-[ACP]. It functions in the pathway lipid metabolism; phospholipid metabolism. Its function is as follows. Catalyzes the reversible formation of acyl-phosphate (acyl-PO(4)) from acyl-[acyl-carrier-protein] (acyl-ACP). This enzyme utilizes acyl-ACP as fatty acyl donor, but not acyl-CoA. The polypeptide is Phosphate acyltransferase (Enterococcus faecalis (strain ATCC 700802 / V583)).